The following is an 89-amino-acid chain: Small ribosomal subunit protein uS17 (89 aa).

It belongs to the universal ribosomal protein uS17 family. Part of the 30S ribosomal subunit.

Functionally, one of the primary rRNA binding proteins, it binds specifically to the 5'-end of 16S ribosomal RNA. This Coxiella burnetii (strain RSA 493 / Nine Mile phase I) protein is Small ribosomal subunit protein uS17.